Consider the following 252-residue polypeptide: Deoxyuridine 5'-triphosphate nucleotidohydrolase, mitochondrial (252 aa).

The transit peptide at 1-69 (MTPLCPRPAL…AGRLSQGCRG (69 aa)) directs the protein to the mitochondrion. 3 positions are modified to phosphoserine: cysteine 11, serine 88, and serine 99. The interval 78–104 (WKGELPKAGGSPAPGPETPAISPSKRA) is disordered. DUTP is bound by residues 173–175 (RSG), 187–193 (GVIDEDY), glycine 198, arginine 241, and 246–247 (FG).

This sequence belongs to the dUTPase family. As to quaternary structure, homotrimer. Requires Mg(2+) as cofactor. In terms of processing, nuclear isoform 2 is phosphorylated in vivo on Ser-11, a reaction that can be catalyzed in vitro by CDC2. Phosphorylation in mature T-cells occurs in a cell cycle-dependent manner. Isoform 3 is not phosphorylated. As to expression, found in a variety of tissues. Isoform 3 expression is constitutive, while isoform 2 expression correlates with the onset of DNA replication (at protein level). Isoform 2 degradation coincides with the cessation of nuclear DNA replication (at protein level).

It localises to the nucleus. It is found in the mitochondrion. The catalysed reaction is dUTP + H2O = dUMP + diphosphate + H(+). Its pathway is pyrimidine metabolism; dUMP biosynthesis; dUMP from dCTP (dUTP route): step 2/2. With respect to regulation, phosphorylation is necessary for activity. In terms of biological role, catalyzes the cleavage of 2'-deoxyuridine 5'-triphosphate (dUTP) into 2'-deoxyuridine 5'-monophosphate (dUMP) and inorganic pyrophosphate and through its action efficiently prevents uracil misincorporation into DNA and at the same time provides dUMP, the substrate for de novo thymidylate biosynthesis. Inhibits peroxisome proliferator-activated receptor (PPAR) activity by binding of its N-terminal to PPAR, preventing the latter's dimerization with retinoid X receptor. Essential for embryonic development. This Homo sapiens (Human) protein is Deoxyuridine 5'-triphosphate nucleotidohydrolase, mitochondrial (DUT).